Consider the following 182-residue polypeptide: uncharacterized protein (182 aa).

It belongs to the DNA 3' phosphatase family.

This is an uncharacterized protein from Autographa californica nuclear polyhedrosis virus (AcMNPV).